The primary structure comprises 116 residues: MANFRGKRINEEVRKEVSDIIRNQIKDPRLTAMVSVTQVEVTKDLRYAKVFVSLFAKNDEEKEESLKALKSSAGFIRREVGNRVKLRSTPEILFEEDNSIDNAMYIESLLNKIKEK.

The protein belongs to the RbfA family. In terms of assembly, monomer. Binds 30S ribosomal subunits, but not 50S ribosomal subunits or 70S ribosomes.

It localises to the cytoplasm. Functionally, one of several proteins that assist in the late maturation steps of the functional core of the 30S ribosomal subunit. Associates with free 30S ribosomal subunits (but not with 30S subunits that are part of 70S ribosomes or polysomes). Required for efficient processing of 16S rRNA. May interact with the 5'-terminal helix region of 16S rRNA. This chain is Ribosome-binding factor A, found in Clostridium perfringens (strain 13 / Type A).